Reading from the N-terminus, the 877-residue chain is Telomere length regulation protein clk-2 (877 aa).

The span at 488-501 (NKDSAAITSKNNLR) shows a compositional bias: polar residues. The segment at 488–509 (NKDSAAITSKNNLRLDSDDDED) is disordered.

The protein belongs to the TEL2 family.

The protein resides in the nucleus. The protein localises to the chromosome. It is found in the telomere. Functionally, DNA damage checkpoint protein required for DNA damage-induced cell cycle arrest and apoptosis, thereby playing a role in genome stability. Regulator of telomere length. This is Telomere length regulation protein clk-2 (clk-2) from Caenorhabditis elegans.